The chain runs to 396 residues: Phosphopentomutase (396 aa).

Mn(2+) contacts are provided by aspartate 13, aspartate 288, histidine 293, aspartate 329, histidine 330, and histidine 341.

The protein belongs to the phosphopentomutase family. Mn(2+) is required as a cofactor.

The protein resides in the cytoplasm. It catalyses the reaction 2-deoxy-alpha-D-ribose 1-phosphate = 2-deoxy-D-ribose 5-phosphate. The enzyme catalyses alpha-D-ribose 1-phosphate = D-ribose 5-phosphate. It participates in carbohydrate degradation; 2-deoxy-D-ribose 1-phosphate degradation; D-glyceraldehyde 3-phosphate and acetaldehyde from 2-deoxy-alpha-D-ribose 1-phosphate: step 1/2. Its function is as follows. Isomerase that catalyzes the conversion of deoxy-ribose 1-phosphate (dRib-1-P) and ribose 1-phosphate (Rib-1-P) to deoxy-ribose 5-phosphate (dRib-5-P) and ribose 5-phosphate (Rib-5-P), respectively. This is Phosphopentomutase from Clostridium perfringens (strain 13 / Type A).